The chain runs to 622 residues: Phosphatidylinositol 4-kinase gamma 6 (622 aa).

The 58-residue stretch at 38–95 folds into the Ubiquitin-like; degenerate domain; that stretch reads RRVFVQTDTGCVLGVELDRNDNVHTVKKRLQIAFNFPTEESSLTFGDMVLKNDLSAVR. In terms of domain architecture, PI3K/PI4K catalytic spans 158–459; sequence GVEPIPVNGG…LTTEQDVLSP (302 aa). Positions 164–170 are G-loop; sequence VNGGLGG. ATP contacts are provided by residues 165–171, lysine 186, and 277–280; these read NGGLGGA and QKFV. Residues 310–318 form a catalytic loop region; sequence LNTDRHGGN. The activation loop stretch occupies residues 339–365; it reads PIDHGLCLPETLEDPYFEWIHWPQASI. An ATP-binding site is contributed by aspartate 341. Serine 565 carries the post-translational modification Phosphoserine.

Belongs to the PI3/PI4-kinase family. Type II PI4K subfamily.

It carries out the reaction a 1,2-diacyl-sn-glycero-3-phospho-(1D-myo-inositol) + ATP = a 1,2-diacyl-sn-glycero-3-phospho-(1D-myo-inositol 4-phosphate) + ADP + H(+). In terms of biological role, the phosphorylation of phosphatidylinositol (PI) to PI4P is the first committed step in the generation of phosphatidylinositol 4,5-bisphosphate (PIP2), a precursor of the second messenger inositol 1,4,5-trisphosphate (InsP3). The chain is Phosphatidylinositol 4-kinase gamma 6 (PI4KG6) from Arabidopsis thaliana (Mouse-ear cress).